Consider the following 338-residue polypeptide: mRNA decay activator protein ZFP36L1 (338 aa).

The tract at residues 1–111 (MTTTLVSATI…QKQPGSGQVN (111 aa)) is necessary and sufficient for the association with mRNA decay enzymes and mRNA decay activation. Serine 54 is modified (phosphoserine; by MAPKAPK2). A Phosphoserine; by PKB/AKT1 modification is found at serine 90. Serine 92 carries the post-translational modification Phosphoserine; by PKB/AKT1 and MAPKAPK2. The tract at residues 93 to 113 (EGGERLLPTQKQPGSGQVNSS) is disordered. A compositionally biased stretch (polar residues) spans 101 to 113 (TQKQPGSGQVNSS). C3H1-type zinc fingers lie at residues 114–142 (RYKT…HGIH) and 152–180 (KYKT…HNAE). The segment at 185 to 338 (LAGGRDLSAD…IFSRLSISDD (154 aa)) is necessary for mRNA decay activation. A Phosphoserine; by PKB/AKT1 and MAPKAPK2 modification is found at serine 203. A disordered region spans residues 273–338 (SPTTFLFRPM…IFSRLSISDD (66 aa)). Residues 305-318 (YLSSSSSSHSGSDS) are compositionally biased toward low complexity. The residue at position 318 (serine 318) is a Phosphoserine. The residue at position 334 (serine 334) is a Phosphoserine; by RPS6KA1.

Associates with the cytoplasmic CCR4-NOT deadenylase and RNA exosome complexes to trigger ARE-containing mRNA deadenylation and decay processes. Interacts with CNOT1. Interacts (via N-terminus) with CNOT6. Interacts with CNOT7; this interaction is inhibited in response to phorbol 12-myristate 13-acetate (PMA) treatment in a p38 MAPK-dependent manner. Interacts with DCP1A. Interacts (via N-terminus) with DCP2. Interacts (via N-terminus) with EXOSC2. Interacts with XRN1. Interacts (via phosphorylated form) with YWHAB; this interaction occurs in a protein kinase AKT1-dependent manner. Interacts (via phosphorylated form) with YWHAZ; this interaction occurs in a p38 MAPK- and AKT-signaling pathways. Post-translationally, phosphorylated. Phosphorylated by RPS6KA1 at Ser-334 upon phorbol 12-myristate 13-acetate (PMA) treatment; this phosphorylation results in dissociation of the CCR4-NOT deadenylase complex and induces p38 MAPK-mediated stabilization of the low-density lipoprotein receptor LDLR mRNA. Phosphorylated by protein kinase AKT1 at Ser-92 and Ser-203 in response to insulin; these phosphorylations stabilize ZFP36L1, increase the association with 14-3-3 proteins and mediate ARE-containing mRNA stabilization. AKT1-mediated phosphorylation at Ser-92 does not impair ARE-containing RNA-binding. Phosphorylated at Ser-54, Ser-92 and Ser-203 by MAPKAPK2; these phosphorylations increase the association with 14-3-3 proteins and mediate ARE-containing mRNA stabilization in a protein kinase AKT1-independent manner. MAPKAPK2-mediated phosphorylations at Ser-54, Ser-92 and Ser-203 do not impair ARE-containing RNA-binding. Phosphorylations increase the association with 14-3-3 proteins and mediate ARE-containing mRNA stabilization during early adipogenesis in a p38 MAPK- and AKT-dependent manner. Phosphorylated by protein kinase AKT1 at Ser-92. In terms of processing, ubiquitinated. Ubiquitination leads to proteasomal degradation, a process inhibited by phosphorylations at Ser-90, Ser-92 and Ser-203.

Its subcellular location is the nucleus. The protein resides in the cytoplasm. It localises to the cytoplasmic granule. The protein localises to the P-body. In terms of biological role, zinc-finger RNA-binding protein that destabilizes several cytoplasmic AU-rich element (ARE)-containing mRNA transcripts by promoting their poly(A) tail removal or deadenylation, and hence provide a mechanism for attenuating protein synthesis. Acts as a 3'-untranslated region (UTR) ARE mRNA-binding adapter protein to communicate signaling events to the mRNA decay machinery. Functions by recruiting the CCR4-NOT deadenylase complex and components of the cytoplasmic RNA decay machinery to the bound ARE-containing mRNAs, and hence promotes ARE-mediated mRNA deadenylation and decay processes. Also induces the degradation of ARE-containing mRNAs even in absence of poly(A) tail. Binds to 3'-UTR ARE of numerous mRNAs. Positively regulates early adipogenesis by promoting ARE-mediated mRNA decay of immediate early genes (IEGs). Promotes ARE-mediated mRNA decay of mineralocorticoid receptor NR3C2 mRNA in response to hypertonic stress. Negatively regulates hematopoietic/erythroid cell differentiation by promoting ARE-mediated mRNA decay of the transcription factor STAT5B mRNA. Positively regulates monocyte/macrophage cell differentiation by promoting ARE-mediated mRNA decay of the cyclin-dependent kinase CDK6 mRNA. Promotes degradation of ARE-containing pluripotency-associated mRNAs in embryonic stem cells (ESCs), such as NANOG, through a fibroblast growth factor (FGF)-induced MAPK-dependent signaling pathway, and hence attenuates ESC self-renewal and positively regulates mesendoderm differentiation. May play a role in mediating pro-apoptotic effects in malignant B-cells by promoting ARE-mediated mRNA decay of BCL2 mRNA. In association with ZFP36L2 maintains quiescence on developing B lymphocytes by promoting ARE-mediated decay of several mRNAs encoding cell cycle regulators that help B cells progress through the cell cycle, and hence ensuring accurate variable-diversity-joining (VDJ) recombination and functional immune cell formation. Together with ZFP36L2 is also necessary for thymocyte development and prevention of T-cell acute lymphoblastic leukemia (T-ALL) transformation by promoting ARE-mediated mRNA decay of the oncogenic transcription factor NOTCH1 mRNA. Participates in the delivery of target ARE-mRNAs to processing bodies (PBs). In addition to its cytosolic mRNA-decay function, plays a role in the regulation of nuclear mRNA 3'-end processing; modulates mRNA 3'-end maturation efficiency of the DLL4 mRNA through binding with an ARE embedded in a weak noncanonical polyadenylation (poly(A)) signal in endothelial cells. Also involved in the regulation of stress granule (SG) and P-body (PB) formation and fusion. Plays a role in vasculogenesis and endocardial development. Plays a role in the regulation of keratinocyte proliferation, differentiation and apoptosis. Plays a role in myoblast cell differentiation. The chain is mRNA decay activator protein ZFP36L1 from Rattus norvegicus (Rat).